A 203-amino-acid polypeptide reads, in one-letter code: Large ribosomal subunit protein bL25 (203 aa).

Belongs to the bacterial ribosomal protein bL25 family. CTC subfamily. As to quaternary structure, part of the 50S ribosomal subunit; part of the 5S rRNA/L5/L18/L25 subcomplex. Contacts the 5S rRNA. Binds to the 5S rRNA independently of L5 and L18.

Functionally, this is one of the proteins that binds to the 5S RNA in the ribosome where it forms part of the central protuberance. In Rickettsia conorii (strain ATCC VR-613 / Malish 7), this protein is Large ribosomal subunit protein bL25.